The chain runs to 226 residues: Translation initiation factor 6 (226 aa).

Belongs to the eIF-6 family.

In terms of biological role, binds to the 50S ribosomal subunit and prevents its association with the 30S ribosomal subunit to form the 70S initiation complex. In Haloquadratum walsbyi (strain DSM 16790 / HBSQ001), this protein is Translation initiation factor 6.